A 169-amino-acid polypeptide reads, in one-letter code: Transcription regulatory protein SNF11 (169 aa).

The disordered stretch occupies residues 1-24 (MSSEIAYSNTNTNTENENRNTGAG). The residue at position 2 (Ser2) is an N-acetylserine. A compositionally biased stretch (low complexity) spans 9–21 (NTNTNTENENRNT). 8 repeat units span residues 28–31 (NTNA), 32–35 (NANA), 36–39 (NATA), 40–43 (NATA), 44–47 (NATA), 48–51 (NATA), 76–80 (LLARV), and 160–165 (LLLARV). Residues 28-51 (NTNANANANATANATANATANATA) are 6 X 4 AA tandem repeats of N-[AT]-[NT]-A. A 2 X 5 AA repeats of L-L-A-R-V region spans residues 76–165 (LLARVIQMNN…SKLYLLLARV (90 aa)).

As to quaternary structure, component of the SWI/SNF global transcription activator complex. The 1.14 MDa SWI/SNF complex is composed of 11 different subunits: one copy each of SWI1, SNF2/SWI2, SNF5, SNF12/SWP73, ARP7/SWP61, ARP9/SWP59; two copies each of SWI3, SNF6, SNF11, SWP82; and three copies of TAF14/SWP29.

It localises to the nucleus. Its function is as follows. Involved in transcriptional activation. Component of the SWI/SNF complex, an ATP-dependent chromatin remodeling complex, which is required for the positive and negative regulation of gene expression of a large number of genes. It changes chromatin structure by altering DNA-histone contacts within a nucleosome, leading eventually to a change in nucleosome position, thus facilitating or repressing binding of gene-specific transcription factors. The sequence is that of Transcription regulatory protein SNF11 (SNF11) from Saccharomyces cerevisiae (strain ATCC 204508 / S288c) (Baker's yeast).